We begin with the raw amino-acid sequence, 357 residues long: DNA replication and repair protein RecF (357 aa).

30–37 (GANGSGKT) serves as a coordination point for ATP.

The protein belongs to the RecF family.

The protein resides in the cytoplasm. The RecF protein is involved in DNA metabolism; it is required for DNA replication and normal SOS inducibility. RecF binds preferentially to single-stranded, linear DNA. It also seems to bind ATP. This chain is DNA replication and repair protein RecF, found in Klebsiella pneumoniae subsp. pneumoniae (strain ATCC 700721 / MGH 78578).